A 111-amino-acid polypeptide reads, in one-letter code: Prefoldin subunit 2 (111 aa).

2 coiled-coil regions span residues 1–36 (MEQR…KDEH) and 72–92 (LETK…TLIQ).

This sequence belongs to the prefoldin subunit beta family. In terms of assembly, heterohexamer of two PFD-alpha type and four PFD-beta type subunits.

It localises to the cytoplasm. Its function is as follows. Binds specifically to cytosolic chaperonin (c-CPN) and transfers target proteins to it. Binds to nascent polypeptide chain and promotes folding in an environment in which there are many competing pathways for nonnative proteins. The sequence is that of Prefoldin subunit 2 (GIM4) from Saccharomyces cerevisiae (strain ATCC 204508 / S288c) (Baker's yeast).